The sequence spans 249 residues: 5'-nucleotidase SurE (249 aa).

A divalent metal cation contacts are provided by Asp-8, Asp-9, Ser-39, and Asn-91.

The protein belongs to the SurE nucleotidase family. A divalent metal cation serves as cofactor.

It is found in the cytoplasm. The enzyme catalyses a ribonucleoside 5'-phosphate + H2O = a ribonucleoside + phosphate. Its function is as follows. Nucleotidase that shows phosphatase activity on nucleoside 5'-monophosphates. The polypeptide is 5'-nucleotidase SurE (Haemophilus influenzae (strain ATCC 51907 / DSM 11121 / KW20 / Rd)).